Reading from the N-terminus, the 240-residue chain is Ubiquinone biosynthesis O-methyltransferase (240 aa).

S-adenosyl-L-methionine is bound by residues Arg-44, Gly-64, Asp-85, and Met-129.

It belongs to the methyltransferase superfamily. UbiG/COQ3 family.

It catalyses the reaction a 3-demethylubiquinol + S-adenosyl-L-methionine = a ubiquinol + S-adenosyl-L-homocysteine + H(+). It carries out the reaction a 3-(all-trans-polyprenyl)benzene-1,2-diol + S-adenosyl-L-methionine = a 2-methoxy-6-(all-trans-polyprenyl)phenol + S-adenosyl-L-homocysteine + H(+). The protein operates within cofactor biosynthesis; ubiquinone biosynthesis. Its function is as follows. O-methyltransferase that catalyzes the 2 O-methylation steps in the ubiquinone biosynthetic pathway. This Escherichia coli O127:H6 (strain E2348/69 / EPEC) protein is Ubiquinone biosynthesis O-methyltransferase.